A 185-amino-acid polypeptide reads, in one-letter code: Ribosome-recycling factor (185 aa).

It belongs to the RRF family.

It localises to the cytoplasm. Responsible for the release of ribosomes from messenger RNA at the termination of protein biosynthesis. May increase the efficiency of translation by recycling ribosomes from one round of translation to another. This is Ribosome-recycling factor from Dehalococcoides mccartyi (strain ATCC BAA-2266 / KCTC 15142 / 195) (Dehalococcoides ethenogenes (strain 195)).